The following is a 310-amino-acid chain: Olfactory receptor 2A4 (310 aa).

The Extracellular segment spans residues 1 to 24; it reads MGDNITSIREFLLLGFPVGPRIQM. N-linked (GlcNAc...) asparagine glycosylation is present at asparagine 4. The helical transmembrane segment at 25-48 threads the bilayer; the sequence is LLFGLFSLFYVFTLLGNGTILGLI. The Cytoplasmic segment spans residues 49-56; the sequence is SLDSRLHA. Residues 57–78 traverse the membrane as a helical segment; it reads PMYFFLSHLAVVDIAYACNTVP. Residues 79-99 lie on the Extracellular side of the membrane; that stretch reads RMLVNLLHPAKPISFAGRMMQ. A helical membrane pass occupies residues 100-119; sequence TFLFSTFAVTECLLLVVMSY. The Cytoplasmic segment spans residues 120–138; the sequence is DLYVAICHPLRYLAIMTWR. A helical transmembrane segment spans residues 139 to 157; the sequence is VCITLAVTSWTTGVLLSLI. At 158–194 the chain is on the extracellular side; it reads HLVLLLPLPFCRPQKIYHFFCEILAVLKLACADTHIN. A helical membrane pass occupies residues 195 to 218; sequence ENMVLAGAISGLVGPLSTIVVSYM. Residues 219–235 lie on the Cytoplasmic side of the membrane; that stretch reads CILCAILQIQSREVQRK. The helical transmembrane segment at 236–258 threads the bilayer; it reads AFRTCFSHLCVIGLVYGTAIIMY. The Extracellular segment spans residues 259–271; it reads VGPRYGNPKEQKK. Residues 272–291 form a helical membrane-spanning segment; sequence YLLLFHSLFNPMLNPLICSL. Residues 292–310 are Cytoplasmic-facing; that stretch reads RNSEVKNTLKRVLGVERAL.

The protein belongs to the G-protein coupled receptor 1 family.

It is found in the cell membrane. In terms of biological role, odorant receptor. The protein is Olfactory receptor 2A4 (OR2A4) of Homo sapiens (Human).